A 297-amino-acid chain; its full sequence is Transmembrane protein 178A (297 aa).

Residues 1–25 (MEPRALVTALSLGLSLCSLGLLVTA) form the signal peptide. The Extracellular segment spans residues 26–179 (IFTDHWYETD…LLHLRRITAG (154 aa)). Basic and acidic residues predominate over residues 41 to 57 (ESCERSRAGADPPDQKN). The disordered stretch occupies residues 41-86 (ESCERSRAGADPPDQKNRLMPLSHLPLRDSPPLGRRLLPGGPGRSD). Low complexity predominate over residues 68-79 (RDSPPLGRRLLP). The N-linked (GlcNAc...) asparagine glycan is linked to Asn158. A helical membrane pass occupies residues 180–200 (FLGMAVAVLLCGCIVATVSFF). Over 201 to 208 (WEESLTQH) the chain is Cytoplasmic. Residues 209 to 229 (VAGLLFLMTGIFCTISLCTYA) form a helical membrane-spanning segment. The Extracellular segment spans residues 230 to 257 (ASVSYDLNRVPKLIYSLPHDVEHGYSWS). A helical transmembrane segment spans residues 258–278 (IFCAWCSLGFIVAAGGLCIAY). The Cytoplasmic segment spans residues 279–297 (PFISRTKIAHLKSGRDSTV).

This sequence belongs to the TMEM178 family. Interacts with STIM1. Highly expressed in the bone and its expression increases during osteoclastogenesis.

The protein localises to the endoplasmic reticulum membrane. Acts as a negative regulator of osteoclast differentiation in basal and inflammatory conditions by regulating TNFSF11-induced Ca (2+) fluxes, thereby controlling the induction of NFATC1. This chain is Transmembrane protein 178A (Tmem178a), found in Mus musculus (Mouse).